The chain runs to 214 residues: Uridine kinase (214 aa).

15-22 (GASASGKS) is a binding site for ATP.

This sequence belongs to the uridine kinase family.

Its subcellular location is the cytoplasm. It carries out the reaction uridine + ATP = UMP + ADP + H(+). The enzyme catalyses cytidine + ATP = CMP + ADP + H(+). It functions in the pathway pyrimidine metabolism; CTP biosynthesis via salvage pathway; CTP from cytidine: step 1/3. Its pathway is pyrimidine metabolism; UMP biosynthesis via salvage pathway; UMP from uridine: step 1/1. In Aeromonas salmonicida (strain A449), this protein is Uridine kinase.